The sequence spans 862 residues: DNA topoisomerase 3-beta-1 (862 aa).

The region spanning 3–153 (TVLMVAEKPS…EKTVFRARFS (151 aa)) is the Toprim domain. The Topo IA-type catalytic domain occupies 171–593 (DHNEALSVDA…HTLDIFKRKF (423 aa)). The O-(5'-phospho-DNA)-tyrosine intermediate role is filled by Y336. The disordered stretch occupies residues 820–855 (HPMHRGGPGRRQGRGRGRGRRPPGKPNPRRPKDKMS). Residues 821 to 851 (PMHRGGPGRRQGRGRGRGRRPPGKPNPRRPK) show a composition bias toward basic residues.

The protein belongs to the type IA topoisomerase family. As to expression, highly expressed in testis.

It carries out the reaction ATP-independent breakage of single-stranded DNA, followed by passage and rejoining.. Releases the supercoiling and torsional tension of DNA introduced during the DNA replication and transcription by transiently cleaving and rejoining one strand of the DNA duplex. Introduces a single-strand break via transesterification at a target site in duplex DNA. The scissile phosphodiester is attacked by the catalytic tyrosine of the enzyme, resulting in the formation of a DNA-(5'-phosphotyrosyl)-enzyme intermediate and the expulsion of a 3'-OH DNA strand. The free DNA strand than undergoes passage around the unbroken strand thus removing DNA supercoils. Finally, in the religation step, the DNA 3'-OH attacks the covalent intermediate to expel the active-site tyrosine and restore the DNA phosphodiester backbone. Possesses negatively supercoiled DNA relaxing activity. The sequence is that of DNA topoisomerase 3-beta-1 (Top3b) from Mus musculus (Mouse).